Consider the following 437-residue polypeptide: Serine hydroxymethyltransferase (437 aa).

(6S)-5,6,7,8-tetrahydrofolate contacts are provided by residues L130 and 134–136 (GHL). K239 carries the post-translational modification N6-(pyridoxal phosphate)lysine.

Belongs to the SHMT family. As to quaternary structure, homodimer. The cofactor is pyridoxal 5'-phosphate.

It is found in the cytoplasm. It catalyses the reaction (6R)-5,10-methylene-5,6,7,8-tetrahydrofolate + glycine + H2O = (6S)-5,6,7,8-tetrahydrofolate + L-serine. Its pathway is one-carbon metabolism; tetrahydrofolate interconversion. It functions in the pathway amino-acid biosynthesis; glycine biosynthesis; glycine from L-serine: step 1/1. Functionally, catalyzes the reversible interconversion of serine and glycine with tetrahydrofolate (THF) serving as the one-carbon carrier. This reaction serves as the major source of one-carbon groups required for the biosynthesis of purines, thymidylate, methionine, and other important biomolecules. Also exhibits THF-independent aldolase activity toward beta-hydroxyamino acids, producing glycine and aldehydes, via a retro-aldol mechanism. The protein is Serine hydroxymethyltransferase of Bartonella quintana (strain Toulouse) (Rochalimaea quintana).